Reading from the N-terminus, the 127-residue chain is MVEVEHWNTLRLRIYIGENDRWEGKPLYKAIVEKLREMGIAGATVYRGIYGFGKKSRIHSSDVLRLSTDLPIVIEVVDRGHNIEKAVNVIKPMIKDGMITVEPTIVLWVGSKEEIKKFEEDAIAERR.

Belongs to the UPF0166 family.

The chain is UPF0166 protein PYRAB06660 from Pyrococcus abyssi (strain GE5 / Orsay).